A 192-amino-acid chain; its full sequence is Adenylate kinase (192 aa).

10 to 15 (GSGKGT) lines the ATP pocket. The tract at residues 30-59 (STGDMLREVISRETEVGRKAKAIINAGALV) is NMP. Residues Thr31, Arg36, 57–59 (ALV), 85–88 (GYPR), and Gln92 each bind AMP. The interval 126–142 (KRVQETIAVGGQVRSDD) is LID. ATP is bound at residue Arg127. The AMP site is built by Arg139 and Arg150. Residue Met178 coordinates ATP.

This sequence belongs to the adenylate kinase family. Monomer.

It is found in the cytoplasm. It catalyses the reaction AMP + ATP = 2 ADP. The protein operates within purine metabolism; AMP biosynthesis via salvage pathway; AMP from ADP: step 1/1. Its function is as follows. Catalyzes the reversible transfer of the terminal phosphate group between ATP and AMP. Plays an important role in cellular energy homeostasis and in adenine nucleotide metabolism. The chain is Adenylate kinase from Bartonella quintana (strain Toulouse) (Rochalimaea quintana).